We begin with the raw amino-acid sequence, 180 residues long: Protein YOP1 (180 aa).

The residue at position 2 (S2) is an N-acetylserine. An interaction with YIP1 region spans residues 2 to 17 (SEYASSIHSQMKQFDT). The Cytoplasmic segment spans residues 2–35 (SEYASSIHSQMKQFDTKYSGNRILQQLENKTNLP). A helical transmembrane segment spans residues 36–55 (KSYLVAGLGFAYLLLIFINV). Over 56 to 57 (GG) the chain is Lumenal. The chain crosses the membrane as a helical span at residues 58 to 78 (VGEILSNFAGFVLPAYLSLVA). The Cytoplasmic segment spans residues 79–88 (LKTPTSTDDT). A helical membrane pass occupies residues 89 to 105 (QLLTYWIVFSFLSVIEF). Residues 106–108 (WSK) are Lumenal-facing. The helical transmembrane segment at 109–127 (AILYLIPFYWFLKTVFLIY) threads the bilayer. The Cytoplasmic portion of the chain corresponds to 128–180 (IALPQTGGARMIYQKIVAPLTDRYILRDVSKTEKDEIRASVNEASKATGASVH).

It belongs to the DP1 family. Oligomer. Interacts with YIP1.

Its subcellular location is the endoplasmic reticulum membrane. The protein resides in the golgi apparatus membrane. In terms of biological role, required to generate and maintain the structure of the tubular endoplasmic reticulum network and the vacuole. Induces high curvature in membranes and causes membrane tubule formation. Involved in membrane/vesicle trafficking. The polypeptide is Protein YOP1 (YOP1) (Saccharomyces cerevisiae (strain ATCC 204508 / S288c) (Baker's yeast)).